The chain runs to 611 residues: tRNA uridine 5-carboxymethylaminomethyl modification enzyme MnmG (611 aa).

14–19 (GAGHAG) is a binding site for FAD. Residue 274 to 288 (GPRYCPSIEDKIVKF) participates in NAD(+) binding.

Belongs to the MnmG family. Homodimer. Heterotetramer of two MnmE and two MnmG subunits. FAD serves as cofactor.

The protein localises to the cytoplasm. Its function is as follows. NAD-binding protein involved in the addition of a carboxymethylaminomethyl (cmnm) group at the wobble position (U34) of certain tRNAs, forming tRNA-cmnm(5)s(2)U34. The chain is tRNA uridine 5-carboxymethylaminomethyl modification enzyme MnmG from Chlamydia abortus (strain DSM 27085 / S26/3) (Chlamydophila abortus).